Consider the following 235-residue polypeptide: Large ribosomal subunit protein uL3 (235 aa).

The interval 150 to 189 is disordered; that stretch reads AGGPASHGSGHHRHAGSTGMRSTPGRGLPGGKKAGQMGNE.

The protein belongs to the universal ribosomal protein uL3 family. Part of the 50S ribosomal subunit. Forms a cluster with proteins L14 and L19.

One of the primary rRNA binding proteins, it binds directly near the 3'-end of the 23S rRNA, where it nucleates assembly of the 50S subunit. The sequence is that of Large ribosomal subunit protein uL3 from Protochlamydia amoebophila (strain UWE25).